A 242-amino-acid chain; its full sequence is Small ribosomal subunit protein uS2 (242 aa).

Belongs to the universal ribosomal protein uS2 family.

The protein is Small ribosomal subunit protein uS2 of Aeromonas salmonicida (strain A449).